A 530-amino-acid chain; its full sequence is UDP-glucuronosyltransferase 1A7 (530 aa).

A signal peptide spans 1-25 (MARAGWTGLLPLYVCLLLTCGFAKA). Asparagine 71, asparagine 292, and asparagine 344 each carry an N-linked (GlcNAc...) asparagine glycan. A helical transmembrane segment spans residues 488–504 (VIGFLLAVVLTVAFITF).

The protein belongs to the UDP-glycosyltransferase family. In terms of assembly, homodimer. Homooligomer. Interacts with UGT1A1, UGT1A3, UGT1A4, UGT1A6, UGT1A8, UGT1A9 and UGT1A10 to form heterodimers. Isoform 1 interacts with isoform 2/i2 suggesting that oligomerization is involved in negative regulation of transferase activity by isoform 2. Isoform 1 also interacts with respective i2 isoforms of UGT1A1, UGT1A3, UGT1A4, UGT1A6, UGT1A8, UGT1A9 and UGT1A10. In terms of tissue distribution, liver and gastric tissue. Isoform 1 and isoform 2 are expressed in esophagus. Neither isoform is expressed in liver, kidney, colon and small intestine.

The protein resides in the endoplasmic reticulum membrane. The catalysed reaction is glucuronate acceptor + UDP-alpha-D-glucuronate = acceptor beta-D-glucuronoside + UDP + H(+). It catalyses the reaction 17alpha-estradiol + UDP-alpha-D-glucuronate = 17alpha-estradiol 3-O-(beta-D-glucuronate) + UDP + H(+). The enzyme catalyses prunetin + UDP-alpha-D-glucuronate = prunetin-5-O-beta-D-glucuronide + UDP. It carries out the reaction 5-epi-5-F2t-IsoP + UDP-alpha-D-glucuronate = 5-epi-5-F2t-IsoP-glucuronide + UDP + H(+). The catalysed reaction is (E)-ferulate + UDP-alpha-D-glucuronate = (E)-ferulic acid beta-D-glucuronate ester + UDP. It catalyses the reaction candesartan + UDP-alpha-D-glucuronate = candesartan O-beta-D-glucuronoside + UDP. The enzyme catalyses SN-38 + UDP-alpha-D-glucuronate = SN-38 O-beta-D-glucuronide + UDP + H(+). It carries out the reaction mycophenolate + UDP-alpha-D-glucuronate = mycophenolate 7-O-beta-D-glucuronide + UDP + H(+). Functionally, UDP-glucuronosyltransferase (UGT) that catalyzes phase II biotransformation reactions in which lipophilic substrates are conjugated with glucuronic acid to increase the metabolite's water solubility, thereby facilitating excretion into either the urine or bile. Essential for the elimination and detoxification of drugs, xenobiotics and endogenous compounds. Catalyzes the glucuronidation of endogenous estrogen hormone epiestradiol. Involved in the glucuronidation of F2-isoprostane (5-epi-5-F2t-IsoP). Involved in the glucuronidation of the phytochemical ferulic acid at the carboxylic acid group. Also catalyzes the glucuronidation of the isoflavones genistein, daidzein, glycitein, formononetin, biochanin A and prunetin, which are phytoestrogens with anticancer and cardiovascular properties. Involved in the glucuronidation of the AGTR1 angiotensin receptor antagonist caderastan, a drug which can inhibit the effect of angiotensin II. Involved in the biotransformation of 7-ethyl-10-hydroxycamptothecin (SN-38), the pharmacologically active metabolite of the anticancer drug irinotecan. Also metabolizes mycophenolate, an immunosuppressive agent. In terms of biological role, lacks UGT glucuronidation activity but acts as a negative regulator of isoform 1. The protein is UDP-glucuronosyltransferase 1A7 of Homo sapiens (Human).